Consider the following 2320-residue polypeptide: Sperm-associated antigen 17 (2320 aa).

Basic and acidic residues-rich tracts occupy residues 139–171 and 199–210; these read DQQR…EKKV and RRGEDDEAKSYI. 11 disordered regions span residues 139 to 211, 388 to 407, 682 to 739, 894 to 928, 950 to 1001, 1084 to 1118, 1191 to 1221, 1334 to 1367, 1393 to 1416, 1983 to 2028, and 2080 to 2101; these read DQQR…SYID, IPEP…KAQY, AEQD…SMDQ, SASK…EKDK, EERL…AKTL, KEKE…EKVK, QGKG…EKKN, SSPD…KSET, DIIP…TTTP, KEAS…YENV, and TKES…EEPD. The span at 703 to 720 shows a compositional bias: polar residues; that stretch reads VTGSTSNSTKPWNSSNRQ. Positions 865–965 form a coiled coil; it reads EEAKYQEAKM…EKKAEKKGKD (101 aa). 2 stretches are compositionally biased toward basic and acidic residues: residues 914–928 and 950–999; these read ELSD…EKDK and EERL…EPAK. Residues 1090–1103 are compositionally biased toward acidic residues; sequence NSEEEEEEEEEKEE. Basic and acidic residues-rich tracts occupy residues 1104-1118 and 1203-1221; these read VEEK…EKVK and KHKD…EKKN. Polar residues-rich tracts occupy residues 2012–2028 and 2082–2094; these read VNKS…YENV and ESVS…NVTR.

As to quaternary structure, interacts (via the C-terminus) with SPAG6; the interaction probably occurs on polymerized microtubules. In terms of tissue distribution, highly expressed in testis, round spermatids, testicular sperm, epididymal sperm and in condensing spermatids (at protein level). Expressed in organs that contain cilia-bearing cells including brain, oviduct, lung, and uterus. Expressed in articular cartilage and bone.

The protein localises to the cytoplasm. The protein resides in the cytoskeleton. It localises to the flagellum axoneme. Its subcellular location is the cytoplasmic vesicle. It is found in the secretory vesicle. The protein localises to the acrosome. The protein resides in the golgi apparatus. Functionally, component of the central pair apparatus of ciliary axonemes. Plays a critical role in the function and structure of motile cilia. May play a role in endochondral bone formation, most likely because of a function in primary cilia of chondrocytes and osteoblasts. Essential for normal spermatogenesis and male fertility. Required for normal manchette structure, transport of proteins along the manchette microtubules and formation of the sperm head and flagellum. Essential for sperm flagellum development and proper assembly of the respiratory motile cilia central pair apparatus, but not the brain ependymal cilia. The chain is Sperm-associated antigen 17 (Spag17) from Mus musculus (Mouse).